Consider the following 476-residue polypeptide: Proline--tRNA ligase 2 (476 aa).

Belongs to the class-II aminoacyl-tRNA synthetase family. ProS type 3 subfamily. As to quaternary structure, homodimer.

The protein resides in the cytoplasm. The catalysed reaction is tRNA(Pro) + L-proline + ATP = L-prolyl-tRNA(Pro) + AMP + diphosphate. Functionally, catalyzes the attachment of proline to tRNA(Pro) in a two-step reaction: proline is first activated by ATP to form Pro-AMP and then transferred to the acceptor end of tRNA(Pro). The sequence is that of Proline--tRNA ligase 2 from Bacillus cereus (strain ATCC 14579 / DSM 31 / CCUG 7414 / JCM 2152 / NBRC 15305 / NCIMB 9373 / NCTC 2599 / NRRL B-3711).